Consider the following 565-residue polypeptide: Proline--tRNA ligase (565 aa).

It belongs to the class-II aminoacyl-tRNA synthetase family. ProS type 1 subfamily. As to quaternary structure, homodimer.

It is found in the cytoplasm. It carries out the reaction tRNA(Pro) + L-proline + ATP = L-prolyl-tRNA(Pro) + AMP + diphosphate. Functionally, catalyzes the attachment of proline to tRNA(Pro) in a two-step reaction: proline is first activated by ATP to form Pro-AMP and then transferred to the acceptor end of tRNA(Pro). As ProRS can inadvertently accommodate and process non-cognate amino acids such as alanine and cysteine, to avoid such errors it has two additional distinct editing activities against alanine. One activity is designated as 'pretransfer' editing and involves the tRNA(Pro)-independent hydrolysis of activated Ala-AMP. The other activity is designated 'posttransfer' editing and involves deacylation of mischarged Ala-tRNA(Pro). The misacylated Cys-tRNA(Pro) is not edited by ProRS. This is Proline--tRNA ligase from Francisella tularensis subsp. mediasiatica (strain FSC147).